Here is a 432-residue protein sequence, read N- to C-terminus: MLPRSINILKLRPTTQVTTTALRALATEAKTTLGATPGSTSTSTSTSTATTTTLESTSTSTSGDATETTIKETKSIKRKRTFFTDELNKGPSFDDFVSGKAKDMLEDPLELARKDPNAKLPLWLKVPIPKGKSFHNVKNDVRELKLSTVCEEAKCPNIGECWGGKKSEATATIMLLGDTCTRGCRFCSVKTNRKPGKPDPMEPENTAEAISRWGLGYVVLTTVDRDDLIDGGANHLKETVQKIKFKAPQILVEVLGGDFRGDLEMVKILANSGLDVYAHNMETVEALTPHIRDRRATYRQSLAVLRTAKETKPSLITKTSLMLGFGETDDQIRQTLKDLREVGCDVVTFGQYMRPTKRHMKVVEYVTPEKFDYWRDVALEMGFLYVASGPLVRSSYKAGEAFIENVLKKRKHNVGESPRMLQEVKPSIFKRA.

Positions 32–68 are enriched in low complexity; sequence TLGATPGSTSTSTSTSTATTTTLESTSTSTSGDATET. A disordered region spans residues 32-71; that stretch reads TLGATPGSTSTSTSTSTATTTTLESTSTSTSGDATETTIK. [4Fe-4S] cluster contacts are provided by Cys150, Cys155, Cys161, Cys180, Cys184, Cys187, and Ser395. Residues 165–384 enclose the Radical SAM core domain; sequence KKSEATATIM…RDVALEMGFL (220 aa).

This sequence belongs to the radical SAM superfamily. Lipoyl synthase family. The cofactor is [4Fe-4S] cluster.

It is found in the mitochondrion. The enzyme catalyses [[Fe-S] cluster scaffold protein carrying a second [4Fe-4S](2+) cluster] + N(6)-octanoyl-L-lysyl-[protein] + 2 oxidized [2Fe-2S]-[ferredoxin] + 2 S-adenosyl-L-methionine + 4 H(+) = [[Fe-S] cluster scaffold protein] + N(6)-[(R)-dihydrolipoyl]-L-lysyl-[protein] + 4 Fe(3+) + 2 hydrogen sulfide + 2 5'-deoxyadenosine + 2 L-methionine + 2 reduced [2Fe-2S]-[ferredoxin]. Its pathway is protein modification; protein lipoylation via endogenous pathway; protein N(6)-(lipoyl)lysine from octanoyl-[acyl-carrier-protein]: step 2/2. In terms of biological role, catalyzes the radical-mediated insertion of two sulfur atoms into the C-6 and C-8 positions of the octanoyl moiety bound to the lipoyl domains of lipoate-dependent enzymes, thereby converting the octanoylated domains into lipoylated derivatives. The chain is Lipoyl synthase, mitochondrial from Lodderomyces elongisporus (strain ATCC 11503 / CBS 2605 / JCM 1781 / NBRC 1676 / NRRL YB-4239) (Yeast).